A 332-amino-acid polypeptide reads, in one-letter code: Malate dehydrogenase, cytoplasmic (332 aa).

NAD(+)-binding positions include 16–17 (QI), Asp-43, and Gly-90. Residue Arg-99 participates in oxaloacetate binding. Positions 113 and 132 each coordinate NAD(+). Positions 132, 163, 188, and 243 each coordinate oxaloacetate. His-188 functions as the Proton acceptor in the catalytic mechanism.

The protein belongs to the LDH/MDH superfamily. MDH type 2 family. As to quaternary structure, homodimer.

It localises to the cytoplasm. It catalyses the reaction (S)-malate + NAD(+) = oxaloacetate + NADH + H(+). The protein is Malate dehydrogenase, cytoplasmic (NR1) of Beta vulgaris (Sugar beet).